Reading from the N-terminus, the 21-residue chain is Protopolybiakinin-1 (21 aa).

A compositionally biased stretch (basic residues) spans 1-11 (DKNKKPIRVGG). The tract at residues 1–21 (DKNKKPIRVGGRRPPGFTPFR) is disordered.

It belongs to the bradykinin-related peptide family. As to expression, expressed by the venom gland.

It is found in the secreted. Causes constriction of the isolated rat ileum muscles (is 13-fold less potent than bradykinin (BK)), as well as degranulation of mast cells (is 7-fold more potent than BK). In vivo, causes algesic effects. Muscle constriction and algesic effects are partially mediated by bradykinin receptors B2 (BDKRB2). This Protopolybia exigua (Neotropical social wasp) protein is Protopolybiakinin-1.